The sequence spans 365 residues: Histidinol-phosphate aminotransferase 2 (365 aa).

The residue at position 226 (Lys-226) is an N6-(pyridoxal phosphate)lysine.

The protein belongs to the class-II pyridoxal-phosphate-dependent aminotransferase family. Histidinol-phosphate aminotransferase subfamily. In terms of assembly, homodimer. Pyridoxal 5'-phosphate is required as a cofactor.

It catalyses the reaction L-histidinol phosphate + 2-oxoglutarate = 3-(imidazol-4-yl)-2-oxopropyl phosphate + L-glutamate. It participates in amino-acid biosynthesis; L-histidine biosynthesis; L-histidine from 5-phospho-alpha-D-ribose 1-diphosphate: step 7/9. The protein is Histidinol-phosphate aminotransferase 2 (hisC2) of Pasteurella multocida (strain Pm70).